The following is a 418-amino-acid chain: L-rhamnose isomerase (418 aa).

Mn(2+) contacts are provided by histidine 261, aspartate 293, and aspartate 295.

This sequence belongs to the rhamnose isomerase family. Mn(2+) is required as a cofactor.

The protein resides in the cytoplasm. The catalysed reaction is L-rhamnopyranose = L-rhamnulose. The protein operates within carbohydrate degradation; L-rhamnose degradation; glycerone phosphate from L-rhamnose: step 1/3. Its function is as follows. Catalyzes the interconversion of L-rhamnose and L-rhamnulose. The chain is L-rhamnose isomerase from Clostridium beijerinckii (strain ATCC 51743 / NCIMB 8052) (Clostridium acetobutylicum).